The following is a 485-amino-acid chain: MSIRYESVENLLTLIKDKKIKPSDVVKDIYDAIEETDPTIKSFLALDKENAIKKAQELDELQAKDQMDGKLFGIPMGIKDNIITNGLETTCASKMLEGFVPIYESTVMEKLHNENAVLIGKLNMDEFAMGGSTETSYFKKTVNPFDHKAVPGGSSGGSAAAVAAGLVPFSLGSDTGGSIRQPAAYCGVVGMKPTYGRVSRFGLVAFASSLDQIGPLTRNVKDNAIVLEAISGADANDSTSAPVDDVDFTSEIGKDIKGLKVALPKEYLGEGVADDVKEAVQNAVETLKSLGAVVEEVSLPNTKFGIPSYYVIASSEASSNLSRFDGIRYGYHSKEAHSLEELYKMSRSEGFGKEVKRRIFLGTFALSSGYYDAYYKKSQKVRTLIKNDFDKVFENYDVVVGPTAPTTAFNLGEEIDDPLTMYANDLLTTPVNLAGLPGISVPCGQSNGRPIGLQFIGKPFDEKTLYRVAYQYETQYNLHDVYEKL.

Residues Lys79 and Ser154 each act as charge relay system in the active site. Residue Ser178 is the Acyl-ester intermediate of the active site.

Belongs to the amidase family. GatA subfamily. Heterotrimer of A, B and C subunits.

It catalyses the reaction L-glutamyl-tRNA(Gln) + L-glutamine + ATP + H2O = L-glutaminyl-tRNA(Gln) + L-glutamate + ADP + phosphate + H(+). Functionally, allows the formation of correctly charged Gln-tRNA(Gln) through the transamidation of misacylated Glu-tRNA(Gln) in organisms which lack glutaminyl-tRNA synthetase. The reaction takes place in the presence of glutamine and ATP through an activated gamma-phospho-Glu-tRNA(Gln). This chain is Glutamyl-tRNA(Gln) amidotransferase subunit A, found in Staphylococcus aureus (strain MRSA252).